A 602-amino-acid polypeptide reads, in one-letter code: Glutamine--fructose-6-phosphate aminotransferase [isomerizing] (602 aa).

C2 (nucleophile; for GATase activity) is an active-site residue. A Glutamine amidotransferase type-2 domain is found at C2 to D217. Residues I67–R87 form a disordered region. The span at K77–R87 shows a compositional bias: basic and acidic residues. 2 SIS domains span residues I283 to N422 and V455 to P592. The active-site For Fru-6P isomerization activity is the K597.

In terms of assembly, homodimer.

The protein localises to the cytoplasm. It catalyses the reaction D-fructose 6-phosphate + L-glutamine = D-glucosamine 6-phosphate + L-glutamate. Functionally, catalyzes the first step in hexosamine metabolism, converting fructose-6P into glucosamine-6P using glutamine as a nitrogen source. In Streptococcus pneumoniae (strain ATCC BAA-255 / R6), this protein is Glutamine--fructose-6-phosphate aminotransferase [isomerizing].